A 145-amino-acid chain; its full sequence is Phospholipase A2 phospholipin (145 aa).

The first 15 residues, 1–15 (MVDLARRCSGSTEGR), serve as a signal peptide directing secretion. Ca(2+)-binding residues include Trp24, Gly26, and Gly28. 5 disulfides stabilise this stretch: Cys25–Cys46, Cys45–Cys84, Cys52–Cys77, Cys75–Cys116, and Cys121–Cys132. The active site involves His49. Asp50 is a Ca(2+) binding site. Positions 124-128 (KRSGR) are excised as a propeptide.

Belongs to the phospholipase A2 family. Group III subfamily. In terms of assembly, heterodimer composed of a small subunit and a large subunit; disulfid-linked. The cofactor is Ca(2+). Expressed by the venom gland.

The protein resides in the secreted. The catalysed reaction is a 1,2-diacyl-sn-glycero-3-phosphocholine + H2O = a 1-acyl-sn-glycero-3-phosphocholine + a fatty acid + H(+). Its function is as follows. Scorpion venom phospholipase A2 (PLA2) that contains enzymatic activity, but does not inhibit ryanodine receptors in contrary to imperatoxin-1, another heterodimer of P.imperator venom. PLA2 catalyzes the calcium-dependent hydrolysis of the 2-acyl groups in 3-sn-phosphoglycerides. The protein is Phospholipase A2 phospholipin of Pandinus imperator (Emperor scorpion).